The chain runs to 218 residues: Pyridoxine/pyridoxamine 5'-phosphate oxidase (218 aa).

Substrate contacts are provided by residues 14–17 (RREY) and Lys-72. FMN is bound by residues 67–72 (RIVLLK), 82–83 (YT), Arg-88, Lys-89, and Gln-111. Substrate-binding residues include Tyr-129, Arg-133, and Ser-137. FMN is bound by residues 146-147 (QS) and Trp-191. Substrate is bound at residue 197 to 199 (RLH). Arg-201 contributes to the FMN binding site.

The protein belongs to the pyridoxamine 5'-phosphate oxidase family. In terms of assembly, homodimer. The cofactor is FMN.

It catalyses the reaction pyridoxamine 5'-phosphate + O2 + H2O = pyridoxal 5'-phosphate + H2O2 + NH4(+). It carries out the reaction pyridoxine 5'-phosphate + O2 = pyridoxal 5'-phosphate + H2O2. The protein operates within cofactor metabolism; pyridoxal 5'-phosphate salvage; pyridoxal 5'-phosphate from pyridoxamine 5'-phosphate: step 1/1. It functions in the pathway cofactor metabolism; pyridoxal 5'-phosphate salvage; pyridoxal 5'-phosphate from pyridoxine 5'-phosphate: step 1/1. Catalyzes the oxidation of either pyridoxine 5'-phosphate (PNP) or pyridoxamine 5'-phosphate (PMP) into pyridoxal 5'-phosphate (PLP). In Escherichia coli O127:H6 (strain E2348/69 / EPEC), this protein is Pyridoxine/pyridoxamine 5'-phosphate oxidase.